A 295-amino-acid chain; its full sequence is Cyclic dipyrimidine nucleotide synthase CdnE (295 aa).

The tract at residues 1–25 (MSIDWEQTFRKWSKPSSETESTKAE) is disordered. Positions 51, 53, and 59 each coordinate UTP. Mg(2+) contacts are provided by Asp65 and Asp67. Asp67, Asp124, and Lys125 together coordinate UTP. Residues Asp128 and Asp139 each contribute to the Mg(2+) site. Residues Asp139, Asn173, Lys201, and Ser220 each contribute to the UTP site. Residues 274–276 (QMW) carry the Pyrimidine specificity motif (R/Q)xW in donor pocket motif.

Belongs to the CD-NTase family. E02 subfamily. Mg(2+) is required as a cofactor.

It catalyses the reaction 2 UTP = c-di-UMP + 2 diphosphate. It carries out the reaction UTP + CTP = cyclic CMP-UMP + 2 diphosphate. Cyclic nucleotide synthase (second messenger synthase) of a CBASS antivirus system. CBASS (cyclic oligonucleotide-based antiphage signaling system) provides immunity against bacteriophage. The CD-NTase protein synthesizes cyclic nucleotides in response to infection; these serve as specific second messenger signals. The signals activate a diverse range of effectors, leading to bacterial cell death and thus abortive phage infection. A type I-B(UU) CBASS system. In terms of biological role, cyclic dinucleotide synthase that catalyzes the synthesis of 3',3'-cyclic UMP-UMP (c-di-UMP) as the major product, and of 3',3'-cyclic CMP-UMP as a minor product, which are second messengers for cell signal transduction. This is Cyclic dipyrimidine nucleotide synthase CdnE from Legionella pneumophila.